A 481-amino-acid chain; its full sequence is Replication factor C large subunit (481 aa).

43–50 (GKPGIGKT) lines the ATP pocket. Basic and acidic residues-rich tracts occupy residues 408–433 (KVEREKEPEPKKKGRKKAESPAKDAD) and 441–457 (VPKEELPVKSAPEERPA). A disordered region spans residues 408–481 (KVEREKEPEP…HNQSTLFDGF (74 aa)). Positions 471-481 (AHNQSTLFDGF) are enriched in polar residues.

This sequence belongs to the activator 1 small subunits family. RfcL subfamily. As to quaternary structure, heteromultimer composed of small subunits (RfcS) and large subunits (RfcL).

Functionally, part of the RFC clamp loader complex which loads the PCNA sliding clamp onto DNA. This chain is Replication factor C large subunit, found in Methanoregula boonei (strain DSM 21154 / JCM 14090 / 6A8).